Reading from the N-terminus, the 193-residue chain is Orotate phosphoribosyltransferase (193 aa).

5-phospho-alpha-D-ribose 1-diphosphate-binding positions include arginine 85, lysine 89, histidine 91, and 111–119; that span reads DDVLTTGKS. The orotate site is built by threonine 115 and arginine 143.

This sequence belongs to the purine/pyrimidine phosphoribosyltransferase family. PyrE subfamily. Homodimer. Mg(2+) serves as cofactor.

It catalyses the reaction orotidine 5'-phosphate + diphosphate = orotate + 5-phospho-alpha-D-ribose 1-diphosphate. It participates in pyrimidine metabolism; UMP biosynthesis via de novo pathway; UMP from orotate: step 1/2. Functionally, catalyzes the transfer of a ribosyl phosphate group from 5-phosphoribose 1-diphosphate to orotate, leading to the formation of orotidine monophosphate (OMP). In Pyrobaculum islandicum (strain DSM 4184 / JCM 9189 / GEO3), this protein is Orotate phosphoribosyltransferase.